A 346-amino-acid polypeptide reads, in one-letter code: 2-oxoglutarate synthase subunit KorA (346 aa).

Heterotetramer of the KorA, KorB, KorC and KorD subunits.

It carries out the reaction 2 oxidized [2Fe-2S]-[ferredoxin] + 2-oxoglutarate + CoA = succinyl-CoA + 2 reduced [2Fe-2S]-[ferredoxin] + CO2 + H(+). This is 2-oxoglutarate synthase subunit KorA (korA) from Archaeoglobus fulgidus (strain ATCC 49558 / DSM 4304 / JCM 9628 / NBRC 100126 / VC-16).